The sequence spans 195 residues: Probable septum site-determining protein MinC (195 aa).

The protein belongs to the MinC family. Interacts with MinD and FtsZ.

Its function is as follows. Cell division inhibitor that blocks the formation of polar Z ring septums. Rapidly oscillates between the poles of the cell to destabilize FtsZ filaments that have formed before they mature into polar Z rings. Prevents FtsZ polymerization. This is Probable septum site-determining protein MinC from Helicobacter pylori (strain G27).